Here is a 685-residue protein sequence, read N- to C-terminus: DNA ligase (685 aa).

NAD(+) is bound by residues 47 to 51, 96 to 97, and E125; these read DSEYD and SL. The active-site N6-AMP-lysine intermediate is the K127. NAD(+)-binding residues include R148, E185, K304, and K328. Zn(2+)-binding residues include C422, C425, C440, and C446. Residues 605–685 form the BRCT domain; that stretch reads ADAQPLKGQT…ALLALFAANR (81 aa).

Belongs to the NAD-dependent DNA ligase family. LigA subfamily. It depends on Mg(2+) as a cofactor. Mn(2+) is required as a cofactor.

The enzyme catalyses NAD(+) + (deoxyribonucleotide)n-3'-hydroxyl + 5'-phospho-(deoxyribonucleotide)m = (deoxyribonucleotide)n+m + AMP + beta-nicotinamide D-nucleotide.. DNA ligase that catalyzes the formation of phosphodiester linkages between 5'-phosphoryl and 3'-hydroxyl groups in double-stranded DNA using NAD as a coenzyme and as the energy source for the reaction. It is essential for DNA replication and repair of damaged DNA. This chain is DNA ligase, found in Shewanella sp. (strain W3-18-1).